We begin with the raw amino-acid sequence, 241 residues long: MAIDTVVLDIEGTVCPITFVKEKLFPYFLEKLPSFLSEISNFTSLQADDKDPIKAILSQLPEQIRTSKDSVLEYFNDLVRRDIKDPILKQLQGFIWKLGYENGDLKAPVYEDSIEFIKTFPSKTENKRIYIYSSGSIKAQILLFGYVDENGKSVDLNEYLSGYFDITTAGFKTQSSSYTKILEDIGKEHGGSVLFLSDNVLEVEAALEAGMESYVVVRPGNAPLTEDDKTKYKIITSLEQL.

Mg(2+) contacts are provided by Asp-9 and Glu-11. Residues Ser-133–Ser-134 and Lys-172 each bind substrate. Asp-198 serves as a coordination point for Mg(2+).

The protein belongs to the HAD-like hydrolase superfamily. MasA/MtnC family. As to quaternary structure, monomer. The cofactor is Mg(2+).

It localises to the cytoplasm. The protein localises to the nucleus. It catalyses the reaction 5-methylsulfanyl-2,3-dioxopentyl phosphate + H2O = 1,2-dihydroxy-5-(methylsulfanyl)pent-1-en-3-one + phosphate. The protein operates within amino-acid biosynthesis; L-methionine biosynthesis via salvage pathway; L-methionine from S-methyl-5-thio-alpha-D-ribose 1-phosphate: step 3/6. Its pathway is amino-acid biosynthesis; L-methionine biosynthesis via salvage pathway; L-methionine from S-methyl-5-thio-alpha-D-ribose 1-phosphate: step 4/6. Its function is as follows. Bifunctional enzyme that catalyzes the enolization of 2,3-diketo-5-methylthiopentyl-1-phosphate (DK-MTP-1-P) into the intermediate 2-hydroxy-3-keto-5-methylthiopentenyl-1-phosphate (HK-MTPenyl-1-P), which is then dephosphorylated to form the acireductone 1,2-dihydroxy-3-keto-5-methylthiopentene (DHK-MTPene). This chain is Enolase-phosphatase E1, found in Scheffersomyces stipitis (strain ATCC 58785 / CBS 6054 / NBRC 10063 / NRRL Y-11545) (Yeast).